Consider the following 435-residue polypeptide: Glutamyl-tRNA reductase (435 aa).

Residues 50–53 (TCNR), serine 110, 115–117 (ETQ), and glutamine 121 each bind substrate. The active-site Nucleophile is the cysteine 51. Position 189-194 (189-194 (GAGEMS)) interacts with NADP(+).

This sequence belongs to the glutamyl-tRNA reductase family. In terms of assembly, homodimer.

It carries out the reaction (S)-4-amino-5-oxopentanoate + tRNA(Glu) + NADP(+) = L-glutamyl-tRNA(Glu) + NADPH + H(+). Its pathway is porphyrin-containing compound metabolism; protoporphyrin-IX biosynthesis; 5-aminolevulinate from L-glutamyl-tRNA(Glu): step 1/2. Its function is as follows. Catalyzes the NADPH-dependent reduction of glutamyl-tRNA(Glu) to glutamate 1-semialdehyde (GSA). This chain is Glutamyl-tRNA reductase, found in Campylobacter lari (strain RM2100 / D67 / ATCC BAA-1060).